Reading from the N-terminus, the 184-residue chain is Guanylate kinase (184 aa).

One can recognise a Guanylate kinase-like domain in the interval 5–183 (KKLIIITGPS…TVKEVLKIIK (179 aa)). 12 to 19 (GPSGVGKG) contributes to the ATP binding site.

It belongs to the guanylate kinase family.

The protein localises to the cytoplasm. It carries out the reaction GMP + ATP = GDP + ADP. In terms of biological role, essential for recycling GMP and indirectly, cGMP. This Prochlorococcus marinus subsp. pastoris (strain CCMP1986 / NIES-2087 / MED4) protein is Guanylate kinase.